A 318-amino-acid polypeptide reads, in one-letter code: Deoxyribose-phosphate aldolase (318 aa).

The active-site Proton donor/acceptor is the Asp-155. Lys-218 functions as the Schiff-base intermediate with acetaldehyde in the catalytic mechanism. Lys-254 acts as the Proton donor/acceptor in catalysis.

The protein belongs to the DeoC/FbaB aldolase family. DeoC type 2 subfamily. As to quaternary structure, interacts with YBX1.

It localises to the cytoplasm. The protein localises to the cytoplasmic granule. The protein resides in the nucleus. The catalysed reaction is 2-deoxy-D-ribose 5-phosphate = D-glyceraldehyde 3-phosphate + acetaldehyde. It functions in the pathway carbohydrate degradation; 2-deoxy-D-ribose 1-phosphate degradation; D-glyceraldehyde 3-phosphate and acetaldehyde from 2-deoxy-alpha-D-ribose 1-phosphate: step 2/2. Catalyzes a reversible aldol reaction between acetaldehyde and D-glyceraldehyde 3-phosphate to generate 2-deoxy-D-ribose 5-phosphate. Participates in stress granule (SG) assembly. May allow ATP production from extracellular deoxyinosine in conditions of energy deprivation. The polypeptide is Deoxyribose-phosphate aldolase (Dera) (Mus musculus (Mouse)).